Consider the following 338-residue polypeptide: Cytochrome P450 monooxygenase easK (338 aa).

Positions 1–16 (MLLLTFTLPVVTLLLA) are cleaved as a signal peptide. N-linked (GlcNAc...) asparagine glycosylation is found at asparagine 240 and asparagine 327.

It belongs to the cytochrome P450 family. Requires heme as cofactor.

It functions in the pathway alkaloid biosynthesis; ergot alkaloid biosynthesis. Cytochrome P450 monooxygenase; part of the gene cluster that mediates the biosynthesis of fumiclavanine C, a fungal ergot alkaloid. DmaW catalyzes the first step of ergot alkaloid biosynthesis by condensing dimethylallyl diphosphate (DMAP) and tryptophan to form 4-dimethylallyl-L-tryptophan. The second step is catalyzed by the methyltransferase easF that methylates 4-dimethylallyl-L-tryptophan in the presence of S-adenosyl-L-methionine, resulting in the formation of 4-dimethylallyl-L-abrine. The catalase easC and the FAD-dependent oxidoreductase easE then transform 4-dimethylallyl-L-abrine to chanoclavine-I which is further oxidized by EasD in the presence of NAD(+), resulting in the formation of chanoclavine-I aldehyde. EasA reduces chanoclavine-I aldehyde to dihydrochanoclavine-I aldehyde that spontaneously dehydrates to form 6,8-dimethyl-6,7-didehydroergoline. EasG then catalyzes the reduction of 6,8-dimethyl-6,7-didehydroergoline to form festuclavine. Hydrolysis of festuclavine by easM then leads to the formation of fumigaclavine B which is in turn acetylated by easN to fumigaclavine A. Finally, easL catalyzes the conversion of fumigaclavine A into fumigaclavine C by attaching a dimethylallyl moiety to C-2 of the indole nucleus. The role of the cytochrome P450 monooxygenase easK within the cluster has not been identified yet. In Aspergillus fumigatus (strain ATCC MYA-4609 / CBS 101355 / FGSC A1100 / Af293) (Neosartorya fumigata), this protein is Cytochrome P450 monooxygenase easK.